We begin with the raw amino-acid sequence, 379 residues long: Sensor histidine kinase YhcY (379 aa).

The Histidine kinase domain maps to 185–373; it reads RLAQELHDSV…KLSIRLPLKS (189 aa). Phosphohistidine; by autocatalysis is present on H191.

It catalyses the reaction ATP + protein L-histidine = ADP + protein N-phospho-L-histidine.. Member of the two-component regulatory system YhcY/YhcZ. Probably activates YhcZ by phosphorylation. This is Sensor histidine kinase YhcY (yhcY) from Bacillus subtilis (strain 168).